A 401-amino-acid chain; its full sequence is MAKLTVEDLPLEGKKVLMRVDFNVPIKDGVVGDDNRIVAALPTIKYVIDHGGRAILFSHLGRIKKEEDKPGLSLRPVAERLSNLLNKPVTFVPVTEGKQLEDAIDNMKNGDVLLVQNTRYEDVKDGEYVKRESGNDPELGKYWASLGDVFVNDAFGTAHRKHASNVGIATNMPGKAAAGYLMEKEIKFLGDAVDNPERPFVAILGGAKVSDKIGVIDNLLDKADKIIIGGGMAYTFYAAKGIKVGNSLVEKDKIDVAKQILDKAGDKLVLPIDNVVADKFNNDADTKVVEGDIDNGWMALDIGPKSVEEFKNVLKDAKTVVWNGPMGVFEMPNFAKGTLEIGKFLGTLTDATTIVGGGDSTAAVKELGVADKLTHISTGGGASLTYLEGNELPGIAAISDK.

Substrate is bound by residues 21 to 23 (DFN), arginine 36, 59 to 62 (HLGR), arginine 119, and arginine 160. Residues lysine 212, glutamate 330, and 357–360 (GGDS) contribute to the ATP site.

Belongs to the phosphoglycerate kinase family. Monomer.

The protein localises to the cytoplasm. The catalysed reaction is (2R)-3-phosphoglycerate + ATP = (2R)-3-phospho-glyceroyl phosphate + ADP. The protein operates within carbohydrate degradation; glycolysis; pyruvate from D-glyceraldehyde 3-phosphate: step 2/5. In Limosilactobacillus reuteri subsp. reuteri (strain JCM 1112) (Lactobacillus reuteri), this protein is Phosphoglycerate kinase.